Consider the following 833-residue polypeptide: Leucine--tRNA ligase (833 aa).

The short motif at 41-52 is the 'HIGH' region element; it reads PYPSGAGLHVGH. Positions 610–614 match the 'KMSKS' region motif; it reads KMSKS. Residue Lys613 participates in ATP binding.

This sequence belongs to the class-I aminoacyl-tRNA synthetase family.

It localises to the cytoplasm. The enzyme catalyses tRNA(Leu) + L-leucine + ATP = L-leucyl-tRNA(Leu) + AMP + diphosphate. This chain is Leucine--tRNA ligase, found in Streptococcus pneumoniae (strain Hungary19A-6).